A 234-amino-acid chain; its full sequence is uncharacterized protein (234 aa).

4 helical membrane passes run 22 to 42 (TFLNTLIYCILLVIYEYIPLI), 59 to 79 (INWALSFGILPCAFAIFAYLI), 154 to 174 (FWIFFEFSIIALISFLIIFFC), and 186 to 206 (LLSLFFFVILSFSVSGIIFAL).

Its subcellular location is the cell membrane. This is an uncharacterized protein from Escherichia coli (strain K12).